A 473-amino-acid chain; its full sequence is Phosphoglucosamine mutase (473 aa).

The active-site Phosphoserine intermediate is the serine 102. Mg(2+) is bound by residues serine 102, aspartate 248, aspartate 250, and aspartate 252. Position 102 is a phosphoserine (serine 102).

It belongs to the phosphohexose mutase family. The cofactor is Mg(2+). In terms of processing, activated by phosphorylation.

It carries out the reaction alpha-D-glucosamine 1-phosphate = D-glucosamine 6-phosphate. Its function is as follows. Catalyzes the conversion of glucosamine-6-phosphate to glucosamine-1-phosphate. The protein is Phosphoglucosamine mutase of Rhodospirillum centenum (strain ATCC 51521 / SW).